The sequence spans 202 residues: N-(5'-phosphoribosyl)anthranilate isomerase (202 aa).

Belongs to the TrpF family.

The enzyme catalyses N-(5-phospho-beta-D-ribosyl)anthranilate = 1-(2-carboxyphenylamino)-1-deoxy-D-ribulose 5-phosphate. Its pathway is amino-acid biosynthesis; L-tryptophan biosynthesis; L-tryptophan from chorismate: step 3/5. This is N-(5'-phosphoribosyl)anthranilate isomerase from Listeria monocytogenes serovar 1/2a (strain ATCC BAA-679 / EGD-e).